Here is a 418-residue protein sequence, read N- to C-terminus: Histidinol dehydrogenase (418 aa).

3 residues coordinate NAD(+): tyrosine 119, glutamine 180, and asparagine 203. 3 residues coordinate substrate: threonine 226, glutamine 248, and histidine 251. Zn(2+) is bound by residues glutamine 248 and histidine 251. Catalysis depends on proton acceptor residues glutamate 316 and histidine 317. 4 residues coordinate substrate: histidine 317, aspartate 350, glutamate 404, and histidine 409. A Zn(2+)-binding site is contributed by aspartate 350. Residue histidine 409 participates in Zn(2+) binding.

Belongs to the histidinol dehydrogenase family. Zn(2+) serves as cofactor.

The enzyme catalyses L-histidinol + 2 NAD(+) + H2O = L-histidine + 2 NADH + 3 H(+). It participates in amino-acid biosynthesis; L-histidine biosynthesis; L-histidine from 5-phospho-alpha-D-ribose 1-diphosphate: step 9/9. Its function is as follows. Catalyzes the sequential NAD-dependent oxidations of L-histidinol to L-histidinaldehyde and then to L-histidine. This is Histidinol dehydrogenase from Staphylococcus aureus (strain COL).